Here is a 203-residue protein sequence, read N- to C-terminus: ATP synthase subunit b (203 aa).

The chain crosses the membrane as a helical span at residues 14–34 (FVWPLLGAGLLLAAEGVAWAS).

It belongs to the ATPase B chain family. In terms of assembly, F-type ATPases have 2 components, F(1) - the catalytic core - and F(0) - the membrane proton channel. F(1) has five subunits: alpha(3), beta(3), gamma(1), delta(1), epsilon(1). F(0) has three main subunits: a(1), b(2) and c(10-14). The alpha and beta chains form an alternating ring which encloses part of the gamma chain. F(1) is attached to F(0) by a central stalk formed by the gamma and epsilon chains, while a peripheral stalk is formed by the delta and b chains.

The protein localises to the cell inner membrane. Functionally, f(1)F(0) ATP synthase produces ATP from ADP in the presence of a proton or sodium gradient. F-type ATPases consist of two structural domains, F(1) containing the extramembraneous catalytic core and F(0) containing the membrane proton channel, linked together by a central stalk and a peripheral stalk. During catalysis, ATP synthesis in the catalytic domain of F(1) is coupled via a rotary mechanism of the central stalk subunits to proton translocation. Its function is as follows. Component of the F(0) channel, it forms part of the peripheral stalk, linking F(1) to F(0). This chain is ATP synthase subunit b, found in Syntrophobacter fumaroxidans (strain DSM 10017 / MPOB).